The chain runs to 276 residues: Small ribosomal subunit protein uS3 (276 aa).

The KH type-2 domain occupies 39–110; sequence IRRETMKFLK…KINIKIKEIK (72 aa).

The protein belongs to the universal ribosomal protein uS3 family. Part of the 30S ribosomal subunit. Forms a tight complex with proteins S10 and S14.

Functionally, binds the lower part of the 30S subunit head. Binds mRNA in the 70S ribosome, positioning it for translation. This is Small ribosomal subunit protein uS3 from Borrelia recurrentis (strain A1).